Consider the following 307-residue polypeptide: Type 2A encapsulin shell protein (307 aa).

This sequence belongs to the encapsulin family. Family 2A subfamily. The encapsulin nanocompartment is formed by 60 subunits; monomers form pentamers which assemble to form shells. There are 12 charged pores where the pentamers meet as well as 3-fold axis channels and dimer channels. Isolated from bacteria in a complex with cysteine desulfurase (AC Q9KII6).

The protein resides in the encapsulin nanocompartment. The protein localises to the cell membrane. Its function is as follows. Shell component of a type 2A encapsulin nanocompartment. Forms encapsulin nanocompartments about 24 nm in diameter from 60 monomers, probably involved in sulfur metabolism. Probably encapsulates cysteine desulfurase. The polypeptide is Type 2A encapsulin shell protein (Mycolicibacterium paratuberculosis (strain ATCC BAA-968 / K-10) (Mycobacterium paratuberculosis)).